Consider the following 252-residue polypeptide: Hydroxyacylglutathione hydrolase (252 aa).

Zn(2+)-binding residues include histidine 54, histidine 56, aspartate 58, histidine 59, histidine 111, aspartate 128, and histidine 166.

This sequence belongs to the metallo-beta-lactamase superfamily. Glyoxalase II family. Monomer. The cofactor is Zn(2+).

It carries out the reaction an S-(2-hydroxyacyl)glutathione + H2O = a 2-hydroxy carboxylate + glutathione + H(+). Its pathway is secondary metabolite metabolism; methylglyoxal degradation; (R)-lactate from methylglyoxal: step 2/2. Functionally, thiolesterase that catalyzes the hydrolysis of S-D-lactoyl-glutathione to form glutathione and D-lactic acid. In Vibrio campbellii (strain ATCC BAA-1116), this protein is Hydroxyacylglutathione hydrolase.